We begin with the raw amino-acid sequence, 417 residues long: Vacuolar cation/proton exchanger 3 (417 aa).

At 1-45 (MENPQIEMGAFKANGPQLQNGGLRSSMVQSWNLQRFVESALRSIR) the chain is on the cytoplasmic side. The chain crosses the membrane as a helical span at residues 46 to 66 (IVIFTSKLNLLLPFGPASIIL). Residues 67–73 (HYTTSRH) are Extracellular-facing. The chain crosses the membrane as a helical span at residues 74 to 94 (GLVFLFSMLGITPLAERLGYA). Residues 95-105 (TEQLAIYTGPT) lie on the Cytoplasmic side of the membrane. The chain crosses the membrane as a helical span at residues 106–126 (VGGLLNATFGNATEMIIAIYA). Residues 115 to 150 (GNATEMIIAIYALKNGMIRVVQQSLLGSILSNMLLV) are cation selection. Over 127–140 (LKNGMIRVVQQSLL) the chain is Extracellular. Residues 141-161 (GSILSNMLLVMGCAFFAGGIV) form a helical membrane-spanning segment. The Cytoplasmic portion of the chain corresponds to 162-173 (HRNKDQVFSKAT). The helical transmembrane segment at 174-194 (AVVNSGLLLMAVMGLMFPAVL) threads the bilayer. Over 195-207 (HFTHSEVRQGASE) the chain is Extracellular. A helical membrane pass occupies residues 208–230 (VSLSRFSSCIMLVAYASYLYFQL). Residues 231 to 258 (SGRNNAYSPIGSEEMPNEDAAEEDEESE) lie on the Cytoplasmic side of the membrane. The chain crosses the membrane as a helical span at residues 259–279 (IGMWESIAWLAMLTLWVSILS). Residues 280-291 (EYLVNAIEGASD) lie on the Extracellular side of the membrane. The chain crosses the membrane as a helical span at residues 292-312 (SLNLPVAFISVILLPIVGNAA). The tract at residues 309 to 344 (GNAAEHASAIMFAMKDKLDITLGVAIGSSTQISMFV) is cation selection. Over 313 to 330 (EHASAIMFAMKDKLDITL) the chain is Cytoplasmic. A helical membrane pass occupies residues 331–351 (GVAIGSSTQISMFVIPFCVVI). The Extracellular portion of the chain corresponds to 352-360 (GWMMGQKMD). The helical transmembrane segment at 361–381 (LNFQLFETATLFITVLVVAFM) threads the bilayer. Residues 382–389 (LQDGVANY) lie on the Cytoplasmic side of the membrane. A helical membrane pass occupies residues 390 to 410 (LKGLMLILCYLIVAASFFVHV). The Extracellular portion of the chain corresponds to 411 to 417 (DPQSSDD).

Belongs to the Ca(2+):cation antiporter (CaCA) (TC 2.A.19) family. Cation/proton exchanger (CAX) subfamily. Ubiquitous.

It is found in the vacuole membrane. Its function is as follows. Vacuolar cation/proton exchanger (CAX). Translocates Ca(2+) and other metal ions into vacuoles using the proton gradient formed by H(+)-ATPase and H(+)-pyrophosphatase. The chain is Vacuolar cation/proton exchanger 3 (CAX3) from Oryza sativa subsp. japonica (Rice).